Consider the following 188-residue polypeptide: Ribosome-recycling factor (188 aa).

The protein belongs to the RRF family.

It localises to the cytoplasm. Functionally, responsible for the release of ribosomes from messenger RNA at the termination of protein biosynthesis. May increase the efficiency of translation by recycling ribosomes from one round of translation to another. This chain is Ribosome-recycling factor, found in Anaeromyxobacter dehalogenans (strain 2CP-1 / ATCC BAA-258).